Reading from the N-terminus, the 420-residue chain is Putative competence-damage inducible protein (420 aa).

It belongs to the CinA family.

The chain is Putative competence-damage inducible protein from Lactiplantibacillus plantarum (strain ATCC BAA-793 / NCIMB 8826 / WCFS1) (Lactobacillus plantarum).